We begin with the raw amino-acid sequence, 251 residues long: Sugar fermentation stimulation protein homolog (251 aa).

This sequence belongs to the SfsA family.

This chain is Sugar fermentation stimulation protein homolog, found in Yersinia pseudotuberculosis serotype O:1b (strain IP 31758).